The sequence spans 461 residues: Cysteine--tRNA ligase (461 aa).

C29 lines the Zn(2+) pocket. The 'HIGH' region motif lies at 31–41 (MTVYDLCHLGH). The Zn(2+) site is built by C213, H238, and E242. A 'KMSKS' region motif is present at residues 270–274 (KMSKS). An ATP-binding site is contributed by K273.

The protein belongs to the class-I aminoacyl-tRNA synthetase family. In terms of assembly, monomer. It depends on Zn(2+) as a cofactor.

Its subcellular location is the cytoplasm. The enzyme catalyses tRNA(Cys) + L-cysteine + ATP = L-cysteinyl-tRNA(Cys) + AMP + diphosphate. This chain is Cysteine--tRNA ligase, found in Delftia acidovorans (strain DSM 14801 / SPH-1).